The following is a 504-amino-acid chain: Ent-kaurene oxidase-like 3 (504 aa).

The helical transmembrane segment at 3-23 (SLLAAGAGGIGVAAAAVGGFI) threads the bilayer. Cys-448 is a binding site for heme.

The protein belongs to the cytochrome P450 family. Heme serves as cofactor. In terms of tissue distribution, expressed in leaf blades.

It is found in the membrane. Functionally, may hydroxylate diterpenes. The protein is Ent-kaurene oxidase-like 3 of Oryza sativa subsp. japonica (Rice).